The following is a 172-amino-acid chain: Small ribosomal subunit protein bS16 (172 aa).

Residues lysine 125–glutamate 172 are disordered. Composition is skewed to basic and acidic residues over residues alanine 129–glutamate 144 and alanine 152–glutamate 163.

It belongs to the bacterial ribosomal protein bS16 family.

The protein is Small ribosomal subunit protein bS16 of Corynebacterium aurimucosum (strain ATCC 700975 / DSM 44827 / CIP 107346 / CN-1) (Corynebacterium nigricans).